A 462-amino-acid chain; its full sequence is Nitrogenase iron-iron protein beta chain (462 aa).

Residues Cys-20, Cys-45, Cys-104, and Ser-143 each contribute to the [8Fe-7S] cluster site.

Belongs to the NifD/NifK/NifE/NifN family. Hexamer of two alpha, two beta, and two delta chains. [8Fe-7S] cluster serves as cofactor.

The catalysed reaction is N2 + 8 reduced [2Fe-2S]-[ferredoxin] + 16 ATP + 16 H2O = H2 + 8 oxidized [2Fe-2S]-[ferredoxin] + 2 NH4(+) + 16 ADP + 16 phosphate + 6 H(+). This iron-iron protein is part of the nitrogenase complex that catalyzes the key enzymatic reactions in nitrogen fixation. Other nitrogenase complexes utilize a molybdenum-iron protein or a vanadium-iron protein. The sequence is that of Nitrogenase iron-iron protein beta chain (anfK) from Azotobacter vinelandii.